The primary structure comprises 208 residues: Probable GTP-binding protein EngB (208 aa).

The EngB-type G domain occupies 23-205; the sequence is LTSEMVILGR…RQTLLKYLLT (183 aa). GTP-binding positions include 31–38, 57–61, 84–87, 154–157, and 182–184; these read GRSNVGKS, GKTRL, DLPG, TKFD, and FNA. Positions 38 and 59 each coordinate Mg(2+).

It belongs to the TRAFAC class TrmE-Era-EngA-EngB-Septin-like GTPase superfamily. EngB GTPase family. Mg(2+) serves as cofactor.

In terms of biological role, necessary for normal cell division and for the maintenance of normal septation. This is Probable GTP-binding protein EngB from Helicobacter pylori (strain HPAG1).